The primary structure comprises 504 residues: ADP,ATP carrier protein 3 (504 aa).

The next 12 helical transmembrane spans lie at 23 to 43 (LKLF…FGAL), 59 to 79 (IISF…TILY), 90 to 110 (YVFY…AYII), 146 to 166 (YGLM…LMFW), 183 to 203 (PVLG…LVFF), 230 to 250 (EMLQ…MLLF), 296 to 316 (IALL…PWKA), 329 to 349 (VHFM…FMII), 364 to 384 (LLTP…IIFI), 386 to 406 (EIGS…VGAI), 449 to 469 (FGKS…PTAT), and 473 to 493 (IIIY…WDVV).

Belongs to the ADP/ATP translocase tlc family.

The protein localises to the cell membrane. In terms of biological role, provides the rickettsial cell with host ATP in exchange for rickettsial ADP. This is an obligate exchange system. This energy acquiring activity is an important component of rickettsial parasitism. This Rickettsia bellii (strain RML369-C) protein is ADP,ATP carrier protein 3 (tlcC).